We begin with the raw amino-acid sequence, 444 residues long: Tol-Pal system protein TolB (444 aa).

The signal sequence occupies residues 1–19; that stretch reads MRNIIYFILLLLFSFKGYA.

This sequence belongs to the TolB family. In terms of assembly, the Tol-Pal system is composed of five core proteins: the inner membrane proteins TolA, TolQ and TolR, the periplasmic protein TolB and the outer membrane protein Pal. They form a network linking the inner and outer membranes and the peptidoglycan layer.

It localises to the periplasm. Its function is as follows. Part of the Tol-Pal system, which plays a role in outer membrane invagination during cell division and is important for maintaining outer membrane integrity. In Rickettsia akari (strain Hartford), this protein is Tol-Pal system protein TolB.